The primary structure comprises 500 residues: Cytochrome P450 2D28 (500 aa).

C446 is a binding site for heme.

It belongs to the cytochrome P450 family. The cofactor is heme.

It localises to the endoplasmic reticulum membrane. The protein resides in the microsome membrane. This Mesocricetus auratus (Golden hamster) protein is Cytochrome P450 2D28 (CYP2D28A).